The sequence spans 3707 residues: Basement membrane-specific heparan sulfate proteoglycan core protein (3707 aa).

The N-terminal stretch at 1–21 (MGQRAVGSLLLGLLLHARLLA) is a signal peptide. O-linked (Xyl...) (heparan sulfate) serine glycans are attached at residues serine 65, serine 71, and serine 76. The 112-residue stretch at 80–191 (QMVYFRALVN…WGFKFRRLGT (112 aa)) folds into the SEA domain. A glycan (N-linked (GlcNAc...) asparagine) is linked at asparagine 89. LDL-receptor class A domains lie at 195-234 (FPRV…ELNC), 281-319 (GPSA…ELGC), 320-359 (ASPP…EANC), and 360-403 (SVKQ…EFGC). 13 disulfide bridges follow: cysteine 199/cysteine 212, cysteine 206/cysteine 225, cysteine 219/cysteine 234, cysteine 285/cysteine 297, cysteine 292/cysteine 310, cysteine 304/cysteine 319, cysteine 325/cysteine 337, cysteine 332/cysteine 350, cysteine 344/cysteine 359, cysteine 368/cysteine 381, cysteine 375/cysteine 394, cysteine 388/cysteine 403, and cysteine 428/cysteine 479. N-linked (GlcNAc...) asparagine glycosylation is present at asparagine 358. The Ig-like C2-type 1 domain occupies 404–504 (MPPQVVTPPQ…VLELVPQRGP (101 aa)). Residues 521–530 (CFCFGVTNVC) enclose the Laminin EGF-like 1; first part domain. Residues 538-730 (DQIRLSFDQP…IHGRAHSVEE (193 aa)) form the Laminin IV type A 1 domain. A glycan (N-linked (GlcNAc...) asparagine) is linked at asparagine 554. A Laminin EGF-like 1; second part domain is found at 731 to 763 (CRCPIGYSGLSCESCDAHFTRVPGGPYLGTCSG). Cystine bridges form between cysteine 764–cysteine 773, cysteine 766–cysteine 780, cysteine 783–cysteine 792, cysteine 795–cysteine 811, cysteine 814–cysteine 829, cysteine 816–cysteine 839, cysteine 842–cysteine 851, cysteine 854–cysteine 869, cysteine 879–cysteine 892, cysteine 894–cysteine 903, and cysteine 906–cysteine 921. 2 Laminin EGF-like domains span residues 764 to 813 (CNCN…ACRP) and 814 to 871 (CPCP…KCRP). The 45-residue stretch at 879-923 (CDERGSLGTSGETCRCKNNVVGRLCNECSDGSFHLSKQNPDGCLK) folds into the Laminin EGF-like 4; truncated domain. Residues 924 to 933 (CFCMGVSRQC) form the Laminin EGF-like 5; first part domain. The region spanning 941–1125 (AQVLGASEQP…GQDSAREVEQ (185 aa)) is the Laminin IV type A 2 domain. Residues 1126–1158 (CTCPPGYRGPSCQDCDTGYTRVPSGLYLGTCER) form the Laminin EGF-like 5; second part domain. 12 cysteine pairs are disulfide-bonded: cysteine 1159–cysteine 1168, cysteine 1161–cysteine 1175, cysteine 1178–cysteine 1187, cysteine 1190–cysteine 1206, cysteine 1209–cysteine 1224, cysteine 1211–cysteine 1234, cysteine 1237–cysteine 1246, cysteine 1249–cysteine 1263, cysteine 1275–cysteine 1287, cysteine 1277–cysteine 1293, cysteine 1295–cysteine 1304, and cysteine 1307–cysteine 1322. Laminin EGF-like domains follow at residues 1159 to 1208 (CNCH…DCQP), 1209 to 1265 (CPCY…PCHR), and 1275 to 1324 (CGCD…GCLP). Residues 1325–1334 (CFCMGVTQQC) form the Laminin EGF-like 9; first part domain. Residues 1344 to 1529 (ISTHFAPGDF…SGPRALEVEE (186 aa)) enclose the Laminin IV type A 3 domain. The 33-residue stretch at 1530–1562 (CRCPPGYVGLSCQDCAPGYTRTGSGLYLGQCEL) folds into the Laminin EGF-like 9; second part domain. Intrachain disulfides connect cysteine 1563–cysteine 1572, cysteine 1565–cysteine 1579, cysteine 1582–cysteine 1591, cysteine 1594–cysteine 1610, cysteine 1613–cysteine 1628, cysteine 1615–cysteine 1638, cysteine 1641–cysteine 1650, and cysteine 1653–cysteine 1668. Laminin EGF-like domains follow at residues 1563-1612 (CECN…DCQP) and 1613-1670 (CACP…RCQP). 14 consecutive Ig-like C2-type domains span residues 1677–1771 (EVQI…KPIM), 1772–1865 (VTVE…STAP), 1866–1954 (VASI…GGSG), 1955–2049 (PRVQ…PAPA), 2050–2148 (SPAP…PGVV), 2149–2244 (PPIR…PAPG), 2245–2343 (LAQP…RLRS), 2344–2436 (PVIS…PPTV), 2437–2532 (SVLP…APGT), 2533–2619 (PQVQ…VESP), 2620–2720 (PYAT…GGST), 2721–2809 (PTVQ…ALPS), 2810–2895 (VLIN…LVQA), and 2896–2980 (LPQI…LQVP). The segment at 1713 to 1733 (DGRPLPSSAQQRHQGSELHFP) is disordered. 3 cysteine pairs are disulfide-bonded: cysteine 1792–cysteine 1839, cysteine 1886–cysteine 1932, and cysteine 1976–cysteine 2021. Residues 2039–2061 (SPSTNSPPAPASPAPIRIESSSS) form a disordered region. Residues 2052 to 2061 (APIRIESSSS) are compositionally biased toward low complexity. 3 cysteine pairs are disulfide-bonded: cysteine 2073–cysteine 2118, cysteine 2170–cysteine 2215, and cysteine 2268–cysteine 2313. Asparagine 2336, asparagine 2394, and asparagine 2427 each carry an N-linked (GlcNAc...) asparagine glycan. Cysteine 2365 and cysteine 2413 are oxidised to a cystine. 2 disulfides stabilise this stretch: cysteine 2456/cysteine 2506 and cysteine 2554/cysteine 2599. An N-linked (GlcNAc...) asparagine glycan is attached at asparagine 2600. Cysteine 2641 and cysteine 2686 are joined by a disulfide. 2 disulfides stabilise this stretch: cysteine 2831–cysteine 2876 and cysteine 2917–cysteine 2962. A Laminin G-like 1 domain is found at 2984–3162 (IPYFTQTPYS…VNLTTHGISH (179 aa)). Residues asparagine 3098 and asparagine 3154 are each glycosylated (N-linked (GlcNAc...) asparagine). Cystine bridges form between cysteine 3137-cysteine 3163, cysteine 3166-cysteine 3177, cysteine 3171-cysteine 3187, cysteine 3204-cysteine 3216, and cysteine 3229-cysteine 3238. In terms of domain architecture, EGF-like spans 3163 to 3241 (CPTCQDRPCQ…GRSGVRCEEG (79 aa)). Residues 3245–3425 (TTPSMSGAGS…VGQCYDSSPC (181 aa)) enclose the Laminin G-like 2 domain. Asparagine 3385 is a glycosylation site (N-linked (GlcNAc...) asparagine). 7 disulfides stabilise this stretch: cysteine 3393/cysteine 3419, cysteine 3425/cysteine 3436, cysteine 3430/cysteine 3446, cysteine 3448/cysteine 3457, cysteine 3464/cysteine 3476, cysteine 3470/cysteine 3481, and cysteine 3483/cysteine 3492. O-linked (Xyl...) (chondroitin sulfate) serine glycosylation is present at serine 3510. In terms of domain architecture, Laminin G-like 3 spans 3518–3705 (QYGAYFYDNG…AQAGANTRPC (188 aa)). Aspartate 3574 and leucine 3591 together coordinate Ca(2+). The mediates motor neuron attachment stretch occupies residues 3615–3617 (LRE). Ca(2+)-binding residues include alanine 3641 and asparagine 3643. Cysteines 3671 and 3705 form a disulfide. The tract at residues 3680 to 3707 (ARPGAPPPQPLDLQHRAQAGANTRPCPS) is disordered.

Has a strong tendency to aggregate in dimers or stellate structures. Interacts with other basement membrane components such as laminin, prolargin and collagen type IV. Interacts with COL13A1. Interacts with FGFBP1. Interacts with VWA1. Interacts (via C-terminus) with ECM1 (via C-terminus). Interacts with SVEP1. In terms of processing, proteolytic processing produces the C-terminal angiogenic peptide, endorepellin. This peptide can be further processed to produce the LG3 peptide. Post-translationally, O-glycosylated. Contains three heparan sulfate chains. Also contains chondroitin sulfate.

It localises to the secreted. The protein resides in the extracellular space. It is found in the extracellular matrix. The protein localises to the basement membrane. In terms of biological role, integral component of basement membranes. Component of the glomerular basement membrane (GBM), responsible for the fixed negative electrostatic membrane charge, and which provides a barrier which is both size- and charge-selective. It serves as an attachment substrate for cells. Plays essential roles in vascularization. Critical for normal heart development and for regulating the vascular response to injury. Also required for avascular cartilage development. Anti-angiogenic and anti-tumor peptide that inhibits endothelial cell migration, collagen-induced endothelial tube morphogenesis and blood vessel growth in the chorioallantoic membrane. Blocks endothelial cell adhesion to fibronectin and type I collagen. Anti-tumor agent in neovascularization. Interaction with its ligand, integrin alpha2/beta1, is required for the anti-angiogenic properties. Evokes a reduction in phosphorylation of receptor tyrosine kinases via alpha2/beta1 integrin-mediated activation of the tyrosine phosphatase, PTPN6. Functionally, has anti-angiogenic properties that require binding of calcium ions for full activity. In Mus musculus (Mouse), this protein is Basement membrane-specific heparan sulfate proteoglycan core protein (Hspg2).